A 273-amino-acid polypeptide reads, in one-letter code: MPELPEVETSLRGVEPYLHGKIIKQIVVRTQKLRWAISDELQHMQGAKIVALSRRAKYLILHTTQGDILIHLGMSGSLGILQENQQPAGKHDHVDLITQDGTVLRYNDPRKFGCWLWTKNAEQHELITRLGPEPLSESFTAAYLFARSRNKTVAVKNFIMNNDIVVGVGNIYACESLFMAGLHPELAAQNLTEKQCERLVKVIKEVLAKAIIQGGTTLKDFIQPDGKPGYFAQVLQVYGRKDEACNDCGTIIEAKVIGQRNSYFCPHCQMLPR.

Catalysis depends on proline 2, which acts as the Schiff-base intermediate with DNA. Glutamate 3 acts as the Proton donor in catalysis. Lysine 57 (proton donor; for beta-elimination activity) is an active-site residue. Histidine 91, arginine 110, and lysine 151 together coordinate DNA. The FPG-type zinc finger occupies 236–270 (QVYGRKDEACNDCGTIIEAKVIGQRNSYFCPHCQM). Arginine 260 acts as the Proton donor; for delta-elimination activity in catalysis.

It belongs to the FPG family. As to quaternary structure, monomer. The cofactor is Zn(2+).

It carries out the reaction Hydrolysis of DNA containing ring-opened 7-methylguanine residues, releasing 2,6-diamino-4-hydroxy-5-(N-methyl)formamidopyrimidine.. The enzyme catalyses 2'-deoxyribonucleotide-(2'-deoxyribose 5'-phosphate)-2'-deoxyribonucleotide-DNA = a 3'-end 2'-deoxyribonucleotide-(2,3-dehydro-2,3-deoxyribose 5'-phosphate)-DNA + a 5'-end 5'-phospho-2'-deoxyribonucleoside-DNA + H(+). Its function is as follows. Involved in base excision repair of DNA damaged by oxidation or by mutagenic agents. Acts as a DNA glycosylase that recognizes and removes damaged bases. Has a preference for oxidized purines, such as 7,8-dihydro-8-oxoguanine (8-oxoG). Has AP (apurinic/apyrimidinic) lyase activity and introduces nicks in the DNA strand. Cleaves the DNA backbone by beta-delta elimination to generate a single-strand break at the site of the removed base with both 3'- and 5'-phosphates. In Actinobacillus pleuropneumoniae serotype 3 (strain JL03), this protein is Formamidopyrimidine-DNA glycosylase.